The sequence spans 145 residues: Large ribosomal subunit protein bL9 (145 aa).

This sequence belongs to the bacterial ribosomal protein bL9 family.

Functionally, binds to the 23S rRNA. In Mesomycoplasma hyopneumoniae (strain 7448) (Mycoplasma hyopneumoniae), this protein is Large ribosomal subunit protein bL9.